A 345-amino-acid chain; its full sequence is MKEIKSIEFKNEVLYLIDQRKLPNSYEIFECKTYRDVNFAIKEMVVRGAPAIGAAAAYGVVLAAKEFLKEDREIFFEKIEEALEVIANSRPTAVNLMWAVKRMKKVIEKNKELELIDIYQALKKEADSIYLEDIETNKKMAKFGNEVIKENAVILTHCNTGALATVGYGTALGVIREAHYSGKNIFVYADETRPRLQGSKLTAWELVQEGIPAKLIADSVAATLIRDGKIDVILVGADRIALNGDTANKIGTFMLSVIAKVYNVPFYVVAPTSTIDFEIESGKEIIIEERSPEEVTHINGVRIAPEGIEVYNPAFDVTPHENITGIITEKGIIKPPYKENILKLK.

Residues 47–49 (RGA), R90, and Q197 each bind substrate. The active-site Proton donor is D238. 248-249 (NK) lines the substrate pocket.

The protein belongs to the eIF-2B alpha/beta/delta subunits family. MtnA subfamily.

The enzyme catalyses 5-(methylsulfanyl)-alpha-D-ribose 1-phosphate = 5-(methylsulfanyl)-D-ribulose 1-phosphate. It functions in the pathway amino-acid biosynthesis; L-methionine biosynthesis via salvage pathway; L-methionine from S-methyl-5-thio-alpha-D-ribose 1-phosphate: step 1/6. Functionally, catalyzes the interconversion of methylthioribose-1-phosphate (MTR-1-P) into methylthioribulose-1-phosphate (MTRu-1-P). The protein is Methylthioribose-1-phosphate isomerase of Thermoanaerobacter pseudethanolicus (strain ATCC 33223 / 39E) (Clostridium thermohydrosulfuricum).